Consider the following 336-residue polypeptide: F420-dependent glucose-6-phosphate dehydrogenase (336 aa).

Aspartate 39 serves as a coordination point for coenzyme F420-(gamma-Glu)n. Histidine 40 (proton donor) is an active-site residue. Coenzyme F420-(gamma-Glu)n contacts are provided by residues threonine 76 and threonine 107–glycine 108. Glutamate 109 functions as the Proton acceptor in the catalytic mechanism. Residues asparagine 112, glycine 177–glycine 178, and glutamine 180–valine 181 contribute to the coenzyme F420-(gamma-Glu)n site. Substrate-binding residues include threonine 195, lysine 198, lysine 259, and arginine 283.

Belongs to the F420-dependent glucose-6-phosphate dehydrogenase family. In terms of assembly, homodimer.

It carries out the reaction oxidized coenzyme F420-(gamma-L-Glu)(n) + D-glucose 6-phosphate + H(+) = 6-phospho-D-glucono-1,5-lactone + reduced coenzyme F420-(gamma-L-Glu)(n). In terms of biological role, catalyzes the coenzyme F420-dependent oxidation of glucose 6-phosphate (G6P) to 6-phosphogluconolactone. Appears to have a role in resistance to oxidative stress, via its consumption of G6P that serves as a source of reducing power to combat oxidative stress in mycobacteria. This is F420-dependent glucose-6-phosphate dehydrogenase from Mycolicibacterium gilvum (strain PYR-GCK) (Mycobacterium gilvum (strain PYR-GCK)).